The sequence spans 376 residues: Erythronate-4-phosphate dehydrogenase (376 aa).

2 residues coordinate substrate: serine 45 and threonine 66. 2 residues coordinate NAD(+): aspartate 146 and threonine 175. Arginine 209 is an active-site residue. NAD(+) is bound at residue aspartate 233. Glutamate 238 is a catalytic residue. Residue histidine 255 is the Proton donor of the active site. Glycine 258 is an NAD(+) binding site. Tyrosine 259 is a binding site for substrate.

It belongs to the D-isomer specific 2-hydroxyacid dehydrogenase family. PdxB subfamily. Homodimer.

Its subcellular location is the cytoplasm. The enzyme catalyses 4-phospho-D-erythronate + NAD(+) = (R)-3-hydroxy-2-oxo-4-phosphooxybutanoate + NADH + H(+). It functions in the pathway cofactor biosynthesis; pyridoxine 5'-phosphate biosynthesis; pyridoxine 5'-phosphate from D-erythrose 4-phosphate: step 2/5. In terms of biological role, catalyzes the oxidation of erythronate-4-phosphate to 3-hydroxy-2-oxo-4-phosphonooxybutanoate. The protein is Erythronate-4-phosphate dehydrogenase of Baumannia cicadellinicola subsp. Homalodisca coagulata.